The chain runs to 369 residues: Type 2 DNA topoisomerase 6 subunit A (369 aa).

The Topo IIA-type catalytic domain maps to 11–149 (KGDALAREKL…FHMRPEEDGA (139 aa)). Catalysis depends on tyrosine 106, which acts as the O-(5'-phospho-DNA)-tyrosine intermediate. Mg(2+) contacts are provided by glutamate 202 and aspartate 254.

Belongs to the TOP6A family. Homodimer. Heterotetramer of two Top6A and two Top6B chains. The cofactor is Mg(2+).

It carries out the reaction ATP-dependent breakage, passage and rejoining of double-stranded DNA.. Relaxes both positive and negative superturns and exhibits a strong decatenase activity. This Methanosarcina mazei (strain ATCC BAA-159 / DSM 3647 / Goe1 / Go1 / JCM 11833 / OCM 88) (Methanosarcina frisia) protein is Type 2 DNA topoisomerase 6 subunit A.